The sequence spans 192 residues: Fe/S biogenesis protein NfuA (192 aa).

The [4Fe-4S] cluster site is built by C149 and C152.

Belongs to the NfuA family. Homodimer. Requires [4Fe-4S] cluster as cofactor.

Functionally, involved in iron-sulfur cluster biogenesis. Binds a 4Fe-4S cluster, can transfer this cluster to apoproteins, and thereby intervenes in the maturation of Fe/S proteins. Could also act as a scaffold/chaperone for damaged Fe/S proteins. This is Fe/S biogenesis protein NfuA from Shewanella amazonensis (strain ATCC BAA-1098 / SB2B).